Reading from the N-terminus, the 479-residue chain is Probable xyloglucan galactosyltransferase GT15 (479 aa).

Residues 1–20 (MKNNNSSSVSIENHPWKKKP) are Cytoplasmic-facing. The chain crosses the membrane as a helical; Signal-anchor for type II membrane protein span at residues 21-40 (TTLLLFLSLLSISLLLLRLS). The Lumenal portion of the chain corresponds to 41-479 (QDKIILITTT…GIRRNEFKTD (439 aa)). Residues asparagine 155, asparagine 242, asparagine 285, and asparagine 391 are each glycosylated (N-linked (GlcNAc...) asparagine).

It belongs to the glycosyltransferase 47 family. Expressed in roots, hypocotyls, cotyledons, leaves, stems and sepals.

The protein resides in the golgi apparatus membrane. Functionally, functions in xyloglucan synthesis by adding side chains to the xylosylated glucan backbone. Involved in the galactosylation of hemicellulose xyloglucan. The sequence is that of Probable xyloglucan galactosyltransferase GT15 from Arabidopsis thaliana (Mouse-ear cress).